The primary structure comprises 84 residues: Putative membrane protein insertion efficiency factor (84 aa).

It belongs to the UPF0161 family.

It localises to the cell inner membrane. Its function is as follows. Could be involved in insertion of integral membrane proteins into the membrane. The polypeptide is Putative membrane protein insertion efficiency factor (Shewanella frigidimarina (strain NCIMB 400)).